Here is a 319-residue protein sequence, read N- to C-terminus: Adenosine receptor A3 (319 aa).

Residues 1–15 (MEADNTTETDWLNIT) lie on the Extracellular side of the membrane. 2 N-linked (GlcNAc...) asparagine glycosylation sites follow: Asn-5 and Asn-13. Residues 16-38 (YITMEAAIGLCAVVGNMLVIWVV) traverse the membrane as a helical segment. The Cytoplasmic portion of the chain corresponds to 39-49 (KLNPTLRTTTV). The helical transmembrane segment at 50 to 73 (YFIVSLALADIAVGVLVIPLAIAV) threads the bilayer. The Extracellular segment spans residues 74-85 (SLQVKMHFYACL). Cysteines 84 and 167 form a disulfide. Residues 86 to 107 (FMSCVLLIFTHASIMSLLAIAV) form a helical membrane-spanning segment. Residues 108–127 (HRYLRVKLTVRYRTVTTQRR) lie on the Cytoplasmic side of the membrane. A helical membrane pass occupies residues 128 to 149 (IWLFLGLCWLVSFLVGLTPMFG). Over 150–178 (WNRKATLASSQNSSTLLCHFRSVVSLDYM) the chain is Extracellular. An N-linked (GlcNAc...) asparagine glycan is attached at Asn-161. The chain crosses the membrane as a helical span at residues 179-199 (VFFSFITWILVPLVVMCIIYL). Over 200–232 (DIFYIIRNKLSQNLTGFRETRAFYGREFKTAKS) the chain is Cytoplasmic. A helical transmembrane segment spans residues 233–256 (LFLVLFLFALCWLPLSIINFVSYF). Topologically, residues 257-262 (DVKIPD) are extracellular. Residues 263-285 (VAMCLGILLSHANSMMNPIVYAC) traverse the membrane as a helical segment. Topologically, residues 286-319 (KIKKFKETYFLILRAVRLCQTSDSLDSNMEQTTE) are cytoplasmic. Cys-304 carries S-palmitoyl cysteine lipidation.

Belongs to the G-protein coupled receptor 1 family. Phosphorylation on Thr-317 and Thr-318 may be crucial for rapid desensitization. Phosphorylation on Thr-317 may be necessary for phosphorylation on Thr-318 to occur.

The protein resides in the cell membrane. Its function is as follows. Receptor for adenosine. The activity of this receptor is mediated by G proteins which inhibits adenylyl cyclase. The chain is Adenosine receptor A3 (Adora3) from Mus musculus (Mouse).